The primary structure comprises 226 residues: MNIILKISGKFFDEDNVNNLIVLRESIRELTDNGFRVGIVTGGGSTARRYIKLAREIGIGEAYLDLLGIWASRLNAYLVMFSLQDLAYMHVPQSLEEFIQDWSHGKVVVTGGFQPGQSTAAVAALVAEASSSKTLVVATNVDGVYEKDPRVYTDVKLIPHLTTQDLRKILEGSQSVQAGTYELLDPLAIKIVERSKIRVVVMNYRKLNRIINILKGEEVSSIIEPT.

6 to 10 (KISGK) contributes to the ATP binding site. Gly-43 is a UMP binding site. 2 residues coordinate ATP: Gly-44 and Arg-48. UMP contacts are provided by residues Asp-65 and 113-119 (FQPGQST). Positions 139, 140, 145, and 148 each coordinate ATP.

The protein belongs to the UMP kinase family. Homohexamer.

The protein resides in the cytoplasm. The enzyme catalyses UMP + ATP = UDP + ADP. The protein operates within pyrimidine metabolism; CTP biosynthesis via de novo pathway; UDP from UMP (UMPK route): step 1/1. Inhibited by UTP. In terms of biological role, catalyzes the reversible phosphorylation of UMP to UDP. This Saccharolobus islandicus (strain Y.N.15.51 / Yellowstone #2) (Sulfolobus islandicus) protein is Uridylate kinase.